We begin with the raw amino-acid sequence, 201 residues long: Large ribosomal subunit protein uL4 (201 aa).

Residues 42–67 (GNSAQKTRSEVSGGGKKPWNQKGTGR) are disordered.

It belongs to the universal ribosomal protein uL4 family. In terms of assembly, part of the 50S ribosomal subunit.

One of the primary rRNA binding proteins, this protein initially binds near the 5'-end of the 23S rRNA. It is important during the early stages of 50S assembly. It makes multiple contacts with different domains of the 23S rRNA in the assembled 50S subunit and ribosome. In terms of biological role, forms part of the polypeptide exit tunnel. This chain is Large ribosomal subunit protein uL4, found in Legionella pneumophila (strain Lens).